Here is a 251-residue protein sequence, read N- to C-terminus: Phosphate import ATP-binding protein PstB 2 (251 aa).

An ABC transporter domain is found at 6-246; that stretch reads FNIENLDLFY…PRDDRTRGYV (241 aa). 38–45 serves as a coordination point for ATP; it reads GPSGCGKS.

Belongs to the ABC transporter superfamily. Phosphate importer (TC 3.A.1.7) family. The complex is composed of two ATP-binding proteins (PstB), two transmembrane proteins (PstC and PstA) and a solute-binding protein (PstS).

The protein localises to the cell inner membrane. It catalyses the reaction phosphate(out) + ATP + H2O = ADP + 2 phosphate(in) + H(+). Functionally, part of the ABC transporter complex PstSACB involved in phosphate import. Responsible for energy coupling to the transport system. The sequence is that of Phosphate import ATP-binding protein PstB 2 from Vibrio cholerae serotype O1 (strain ATCC 39315 / El Tor Inaba N16961).